The sequence spans 762 residues: Molybdenum cofactor sulfurase 2 (762 aa).

The residue at position 234 (Lys-234) is an N6-(pyridoxal phosphate)lysine. The active site involves Cys-400. Positions 590–738 constitute an MOSC domain; it reads AWISKALRMP…LECGSILEPV (149 aa).

It belongs to the class-V pyridoxal-phosphate-dependent aminotransferase family. MOCOS subfamily. Requires pyridoxal 5'-phosphate as cofactor.

It carries out the reaction Mo-molybdopterin + L-cysteine + AH2 = thio-Mo-molybdopterin + L-alanine + A + H2O. Its function is as follows. Sulfurates the molybdenum cofactor. Sulfation of molybdenum is essential for xanthine dehydrogenase (XDH) and aldehyde oxidase (ADO) enzymes in which molybdenum cofactor is liganded by 1 oxygen and 1 sulfur atom in active form. This chain is Molybdenum cofactor sulfurase 2, found in Aedes aegypti (Yellowfever mosquito).